The sequence spans 879 residues: DNA mismatch repair protein MutS (879 aa).

629–636 (GPNMGGKS) contributes to the ATP binding site.

It belongs to the DNA mismatch repair MutS family.

Functionally, this protein is involved in the repair of mismatches in DNA. It is possible that it carries out the mismatch recognition step. This protein has a weak ATPase activity. The protein is DNA mismatch repair protein MutS of Erythrobacter litoralis (strain HTCC2594).